The following is a 548-amino-acid chain: uncharacterized protein (548 aa).

Residues 1–24 (MKKATKLLLSILPISSISFLSVVS) form the signal peptide. Residue Cys-25 is the site of N-palmitoyl cysteine attachment. Residue Cys-25 is the site of S-diacylglycerol cysteine attachment. Residues 26-129 (STRNSNAKQP…NNQHADQPNI (104 aa)) form a disordered region. Over residues 34–44 (QPDKKPEKPNE) the composition is skewed to basic and acidic residues. Residues 58 to 78 (PTNNNNNSNNNSNSNNNKPGS) show a composition bias toward low complexity. The segment covering 83 to 109 (ENKDPSKSEETPEKPERDPKKPDKQPQ) has biased composition (basic and acidic residues). Residues 110 to 128 (GDDPNNHQPHNNQHADQPN) show a composition bias toward low complexity.

It belongs to the mycoplasma p72 lipoprotein family.

The protein localises to the cell membrane. This is an uncharacterized protein from Mycoplasma mycoides subsp. mycoides SC (strain CCUG 32753 / NCTC 10114 / PG1).